The sequence spans 187 residues: Inosine triphosphate pyrophosphatase (187 aa).

11 to 16 (TSNKNK) contributes to the ITP binding site. Residue glutamate 39 coordinates Mg(2+). ITP contacts are provided by residues lysine 51, 67 to 68 (DT), lysine 84, 143 to 146 (FGWD), lysine 164, and 169 to 170 (HR).

This sequence belongs to the HAM1 NTPase family. In terms of assembly, homodimer. Requires Mg(2+) as cofactor. The cofactor is Mn(2+).

Its subcellular location is the cytoplasm. It is found in the nucleus. It catalyses the reaction ITP + H2O = IMP + diphosphate + H(+). The enzyme catalyses dITP + H2O = dIMP + diphosphate + H(+). The catalysed reaction is XTP + H2O = XMP + diphosphate + H(+). Functionally, pyrophosphatase that hydrolyzes non-canonical purine nucleotides such as inosine triphosphate (ITP), deoxyinosine triphosphate (dITP) or xanthosine 5'-triphosphate (XTP) to their respective monophosphate derivatives. The enzyme does not distinguish between the deoxy- and ribose forms. Probably excludes non-canonical purines from RNA and DNA precursor pools, thus preventing their incorporation into RNA and DNA and avoiding chromosomal lesions. The protein is Inosine triphosphate pyrophosphatase of Aspergillus fumigatus (strain ATCC MYA-4609 / CBS 101355 / FGSC A1100 / Af293) (Neosartorya fumigata).